A 593-amino-acid chain; its full sequence is Pyruvate decarboxylase 1 (593 aa).

Positions 1 to 19 (METETETPNGSTPCPTSAP) are enriched in polar residues. Positions 1–20 (METETETPNGSTPCPTSAPS) are disordered. 2 residues coordinate substrate: D55 and H142. Residues 420–502 (DSWFNCQKLR…FLINNGGYTI (83 aa)) form a thiamine pyrophosphate binding region. D470, N497, and G499 together coordinate Mg(2+). A substrate-binding site is contributed by E503.

The protein belongs to the TPP enzyme family. As to quaternary structure, homotetramer. It depends on a metal cation as a cofactor. The cofactor is thiamine diphosphate.

It carries out the reaction a 2-oxocarboxylate + H(+) = an aldehyde + CO2. The protein is Pyruvate decarboxylase 1 (PDC1) of Pisum sativum (Garden pea).